Consider the following 337-residue polypeptide: Glyceraldehyde-3-phosphate dehydrogenase (337 aa).

Residues 12–13, D34, and R79 contribute to the NAD(+) site; that span reads RI. Residues 150 to 152, T181, 210 to 211, and R233 contribute to the D-glyceraldehyde 3-phosphate site; these read SCT and TG. C151 functions as the Nucleophile in the catalytic mechanism. N315 provides a ligand contact to NAD(+).

It belongs to the glyceraldehyde-3-phosphate dehydrogenase family. Homotetramer.

The protein localises to the cytoplasm. It carries out the reaction D-glyceraldehyde 3-phosphate + phosphate + NAD(+) = (2R)-3-phospho-glyceroyl phosphate + NADH + H(+). Its pathway is carbohydrate degradation; glycolysis; pyruvate from D-glyceraldehyde 3-phosphate: step 1/5. This is Glyceraldehyde-3-phosphate dehydrogenase (GPD) from Coccidioides immitis (strain RS) (Valley fever fungus).